The sequence spans 512 residues: Probable malate:quinone oxidoreductase (512 aa).

This sequence belongs to the MQO family. It depends on FAD as a cofactor.

It carries out the reaction (S)-malate + a quinone = a quinol + oxaloacetate. It functions in the pathway carbohydrate metabolism; tricarboxylic acid cycle; oxaloacetate from (S)-malate (quinone route): step 1/1. The sequence is that of Probable malate:quinone oxidoreductase from Bradyrhizobium diazoefficiens (strain JCM 10833 / BCRC 13528 / IAM 13628 / NBRC 14792 / USDA 110).